Reading from the N-terminus, the 1240-residue chain is DNA polymerase catalytic subunit (1240 aa).

Residues 1 to 26 (MFCAAGGPASPGGKSAARAASGFFAP) are compositionally biased toward low complexity. Disordered regions lie at residues 1 to 65 (MFCA…PAQR), 646 to 695 (GLDK…RETG), and 1103 to 1139 (AAAP…ASKP). The segment covering 44–56 (NFYNPHLAQTGTQ) has biased composition (polar residues). The span at 669–688 (NGDEDKDDDEDGDEDGDERE) shows a compositional bias: acidic residues.

Belongs to the DNA polymerase type-B family. Forms a complex with the ssDNA-binding protein UL29, the DNA polymerase processivity factor, and the alkaline exonuclease. Interacts with the putative helicase-primase complex subunit UL8; this interaction may coordinate leading and lagging strand DNA synthesis at the replication fork.

It localises to the host nucleus. It catalyses the reaction DNA(n) + a 2'-deoxyribonucleoside 5'-triphosphate = DNA(n+1) + diphosphate. It carries out the reaction Endonucleolytic cleavage to 5'-phosphomonoester.. In terms of biological role, replicates viral genomic DNA. The replication complex is composed of six viral proteins: the DNA polymerase, processivity factor, primase, primase-associated factor, helicase, and ssDNA-binding protein. Additionally, the polymerase contains an intrinsic ribonuclease H (RNase H) activity that specifically degrades RNA/DNA heteroduplexes or duplex DNA substrates in the 5' to 3' direction. Therefore, it can catalyze the excision of the RNA primers that initiate the synthesis of Okazaki fragments at a replication fork during viral DNA replication. This is DNA polymerase catalytic subunit from Human herpesvirus 2 (strain 186) (HHV-2).